We begin with the raw amino-acid sequence, 643 residues long: MEDSEGTDGTDEDGCRAGGWFHVEAIITHGQSQVSSDEDEDETETREDLDFIDNRVPGDGQEVPLQLYAQQIAQDDEATVQALKRKFVASPLSACSCIENDLSPRLDAISLNRKSEKAKRRLFETEPPDSGYGNTQMVVGTPEEVTGEDNSQGGRPVDVREEERQGGDGEADLTVHTPQSGTDAAGSVLTLLKSSNLKATLLSKFKELYGVGYYELVRQFKSSRTACADWVVCAFRVYYAVAEGIKQLIQPHTQYAHIQIQTSSWGMVVFMLLRYNCAKNRDTVSKNMSMLLNIPEKHMLIEPPKLRSTPAALYWYKTSMGNGSEVYGETPEWIVRQTLIGHSMEDEQFKLSVMVQYAYDHDITDESALAFEYAQLADVDANAAAFLNSNCQAKYLKDAVTMCRHYKRAEREQMSMSQWITFRGSKISEEGDWKPIVKFLRHQGVEFVSFLAAFKSFLKGVPKKNCIVFYGPADTGKSYFCMSLLQFLGGAVISYANSSSHFWLQPLADSKIGLLDDATAQCWTYIDTYLRNLLDGNPFSIDRKHKTLLQIKCPPLMITTNINPLEEDRWKYLRSRVTLFKFTNPFPFASPGEPLYPINNANWKCFFQRSWSRLDLNSPEDQEDNGNTGEPFRCVPGDVARTV.

Positions 28 to 60 are disordered; the sequence is THGQSQVSSDEDEDETETREDLDFIDNRVPGDG. Over residues 36 to 45 the composition is skewed to acidic residues; that stretch reads SDEDEDETET. The Nuclear localization signal motif lies at 84-86; that stretch reads KRK. Residues Ser-90 and Ser-103 each carry the phosphoserine; by host modification. The Nuclear export signal signature appears at 102–111; it reads LSPRLDAISL. Residues 119 to 179 are disordered; the sequence is KRRLFETEPP…EADLTVHTPQ (61 aa). Residues 157 to 167 are compositionally biased toward basic and acidic residues; that stretch reads VDVREEERQGG. The segment at 180–346 is DNA-binding region; that stretch reads SGTDAAGSVL…QTLIGHSMED (167 aa). The region spanning 445 to 595 is the SF3 helicase domain; that stretch reads VEFVSFLAAF…FPFASPGEPL (151 aa). 471–478 is an ATP binding site; it reads GPADTGKS. Lys-552 is covalently cross-linked (Glycyl lysine isopeptide (Lys-Gly) (interchain with G-Cter in SUMO)).

This sequence belongs to the papillomaviridae E1 protein family. Can form hexamers. Interacts with E2 protein; this interaction increases E1 DNA binding specificity. Interacts with host DNA polymerase subunit POLA2. Interacts with host single stranded DNA-binding protein RPA1. Interacts with host TOP1; this interaction stimulates the enzymatic activity of TOP1. Phosphorylated. Post-translationally, sumoylated.

The protein resides in the host nucleus. It carries out the reaction Couples ATP hydrolysis with the unwinding of duplex DNA by translocating in the 3'-5' direction.. The catalysed reaction is ATP + H2O = ADP + phosphate + H(+). ATP-dependent DNA 3'-5' helicase required for initiation of viral DNA replication. It forms a complex with the viral E2 protein. The E1-E2 complex binds to the replication origin which contains binding sites for both proteins. During the initial step, a dimer of E1 interacts with a dimer of protein E2 leading to a complex that binds the viral origin of replication with high specificity. Then, a second dimer of E1 displaces the E2 dimer in an ATP-dependent manner to form the E1 tetramer. Following this, two E1 monomers are added to each half of the site, which results in the formation of two E1 trimers on the viral ori. Subsequently, two hexamers will be created. The double hexamer acts as a bi-directional helicase machinery and unwinds the viral DNA and then recruits the host DNA polymerase to start replication. The protein is Replication protein E1 of Human papillomavirus 57.